The chain runs to 1112 residues: Zinc finger protein 654 (1112 aa).

The segment at proline 482–proline 514 is disordered. Residues serine 494–aspartate 508 show a composition bias toward acidic residues. 5 C2H2-type zinc fingers span residues phenylalanine 566–histidine 588, phenylalanine 738–histidine 763, glycine 779–histidine 801, tyrosine 807–histidine 831, and alanine 836–histidine 860. 2 disordered regions span residues phenylalanine 885–threonine 906 and valine 997–serine 1018. Composition is skewed to polar residues over residues serine 886 to serine 899 and histidine 1002 to serine 1018. Residues serine 1107 and serine 1111 each carry the phosphoserine modification.

Belongs to the krueppel C2H2-type zinc-finger protein family.

The protein resides in the nucleus. Functionally, may be involved in transcriptional regulation. The chain is Zinc finger protein 654 from Mus musculus (Mouse).